We begin with the raw amino-acid sequence, 574 residues long: Septation ring formation regulator EzrA (574 aa).

Residues 1–7 (MSSGIIL) are Extracellular-facing. The chain crosses the membrane as a helical span at residues 8–26 (LIVAIVLLVIIAYLVGVII). Residues 27–574 (RKRNDSLITS…YEKTREHIRF (548 aa)) are Cytoplasmic-facing. Coiled-coil stretches lie at residues 102–141 (NFIR…EEKN), 274–350 (ELVT…ETES), and 459–520 (QLEA…SFEA).

Belongs to the EzrA family.

The protein localises to the cell membrane. Its function is as follows. Negative regulator of FtsZ ring formation; modulates the frequency and position of FtsZ ring formation. Inhibits FtsZ ring formation at polar sites. Interacts either with FtsZ or with one of its binding partners to promote depolymerization. This Streptococcus pyogenes serotype M4 (strain MGAS10750) protein is Septation ring formation regulator EzrA.